We begin with the raw amino-acid sequence, 198 residues long: Ribonuclease HII (198 aa).

The RNase H type-2 domain occupies 11–198 (NLIAGVDEVG…GPVKRVLGLV (188 aa)). A divalent metal cation is bound by residues aspartate 17, glutamate 18, and aspartate 109.

This sequence belongs to the RNase HII family. It depends on Mn(2+) as a cofactor. Mg(2+) is required as a cofactor.

Its subcellular location is the cytoplasm. The enzyme catalyses Endonucleolytic cleavage to 5'-phosphomonoester.. Functionally, endonuclease that specifically degrades the RNA of RNA-DNA hybrids. The chain is Ribonuclease HII from Yersinia pseudotuberculosis serotype O:3 (strain YPIII).